Consider the following 237-residue polypeptide: Mitochondrial carrier-like protein L276 (237 aa).

3 Solcar repeats span residues 1–83, 85–161, and 164–233; these read MAKY…FENK, YPYT…LNEY, and KPVV…LNKK. 5 consecutive transmembrane segments (helical) span residues 11-27, 60-76, 91-108, 140-160, and 166-183; these read AIAT…ICTF, VPAI…KYFL, MING…THPI, SFGK…TLNE, and VVSS…MQPL. A Substrate recognition motif is present at residues 191–196; it reads IYGLSL. A helical transmembrane segment spans residues 205–226; sequence YYRGLSLNLMRIVPHFVITMTT.

This sequence belongs to the mitochondrial carrier (TC 2.A.29) family.

Its subcellular location is the host mitochondrion inner membrane. Transports dATP and to a lesser extent dTTP, TTP, UTP and ADP, possibly across the mitochondrial inner membrane. This Acanthamoeba polyphaga (Amoeba) protein is Mitochondrial carrier-like protein L276.